A 107-amino-acid polypeptide reads, in one-letter code: Nucleoid-associated protein RF_1365 (107 aa).

It belongs to the YbaB/EbfC family. In terms of assembly, homodimer.

The protein localises to the cytoplasm. It localises to the nucleoid. In terms of biological role, binds to DNA and alters its conformation. May be involved in regulation of gene expression, nucleoid organization and DNA protection. The chain is Nucleoid-associated protein RF_1365 from Rickettsia felis (strain ATCC VR-1525 / URRWXCal2) (Rickettsia azadi).